Consider the following 423-residue polypeptide: Alpha-1-antichymotrypsin (423 aa).

Positions 1–23 are cleaved as a signal peptide; sequence MERMLPLLALGLLAAGFCPAVLC. N-linked (GlcNAc...) asparagine glycans are attached at residues asparagine 33, asparagine 93, asparagine 106, asparagine 127, and asparagine 186. A DNA-binding region spans residues 235–237; that stretch reads KKK. Asparagine 271 is a glycosylation site (N-linked (GlcNAc...) asparagine). The RCL stretch occupies residues 369–394; sequence GTEASAATAVKITLLSALVETRTIVR. The interval 381–389 is O-glycosylated at one site; sequence TLLSALVET.

Belongs to the serpin family. Interacts with DNAJC1. Post-translationally, N- and O-glycosylated. In terms of tissue distribution, plasma. Synthesized in the liver. Like the related alpha-1-antitrypsin, its concentration increases in the acute phase of inflammation or infection. Found in the amyloid plaques from the hippocampus of Alzheimer disease brains.

Its subcellular location is the secreted. In terms of biological role, although its physiological function is unclear, it can inhibit neutrophil cathepsin G and mast cell chymase, both of which can convert angiotensin-1 to the active angiotensin-2. This Homo sapiens (Human) protein is Alpha-1-antichymotrypsin (SERPINA3).